The sequence spans 398 residues: Mannitol-1-phosphate 5-dehydrogenase (398 aa).

10–21 is a binding site for NAD(+); the sequence is AVHFGAGNIGRG. Lys-221 is an active-site residue.

This sequence belongs to the mannitol dehydrogenase family. Monomer.

The catalysed reaction is D-mannitol 1-phosphate + NAD(+) = beta-D-fructose 6-phosphate + NADH + H(+). Catalyzes the NAD(H)-dependent interconversion of D-fructose 6-phosphate and D-mannitol 1-phosphate in the mannitol metabolic pathway. The sequence is that of Mannitol-1-phosphate 5-dehydrogenase from Neurospora crassa (strain ATCC 24698 / 74-OR23-1A / CBS 708.71 / DSM 1257 / FGSC 987).